The following is a 149-amino-acid chain: Large ribosomal subunit protein uL15 (149 aa).

The segment at His-8–Ala-49 is disordered. Over residues Gly-31–Lys-45 the composition is skewed to low complexity.

The protein belongs to the universal ribosomal protein uL15 family. In terms of assembly, part of the 50S ribosomal subunit.

Functionally, binds to the 23S rRNA. In Corynebacterium aurimucosum (strain ATCC 700975 / DSM 44827 / CIP 107346 / CN-1) (Corynebacterium nigricans), this protein is Large ribosomal subunit protein uL15.